Consider the following 322-residue polypeptide: Beta-1,4-galactosyltransferase 7 (322 aa).

Over 1 to 9 the chain is Cytoplasmic; that stretch reads MVNISTINW. The helical; Signal-anchor for type II membrane protein transmembrane segment at 10 to 30 threads the bilayer; the sequence is VFVCGLSFCLGGIAVLSLMPL. The Lumenal portion of the chain corresponds to 31–322; that stretch reads GSDCVCPLSN…TAAAASAVQT (292 aa). The UDP-alpha-D-galactose site is built by P82, R84, D145, and V146. D147 serves as a coordination point for Mn(2+). 4 residues coordinate UDP-alpha-D-galactose: Y177, G185, W207, and G208. L209 is a beta-D-xylose binding site. E210 contacts UDP-alpha-D-galactose. 2 residues coordinate beta-D-xylose: D211 and D212. N-linked (GlcNAc...) asparagine glycosylation occurs at N236. 3 residues coordinate UDP-alpha-D-galactose: H241, H243, and R250. The Mn(2+) site is built by H241 and H243. 2 cysteine pairs are disulfide-bonded: C255–C310 and C300–C308.

It belongs to the glycosyltransferase 7 family. Mn(2+) serves as cofactor. As to expression, expressed in male and female adults. Expressed in head.

The protein localises to the golgi apparatus membrane. It catalyses the reaction 3-O-(beta-D-xylosyl)-L-seryl-[protein] + UDP-alpha-D-galactose = 3-O-(beta-D-galactosyl-(1-&gt;4)-beta-D-xylosyl)-L-seryl-[protein] + UDP + H(+). It functions in the pathway protein modification; protein glycosylation. Transfers galactose from UDP-D-Galactose (UDP-Gal) to the acceptor xylose residue in the linkage tetrasaccharide region of the glycosaminoglycan side chain of proteoglycans. No activity towards beta-GlcNAc, beta-Glc, beta-Gal, and beta-GalNAc as acceptors. This Drosophila melanogaster (Fruit fly) protein is Beta-1,4-galactosyltransferase 7.